The primary structure comprises 395 residues: Cation channel sperm-associated protein 3 (395 aa).

Topologically, residues 1-48 (MSQHFHHNPVRVKSGSLFATASEALQARLSKIKRKDKECQAYFRKVIK) are cytoplasmic. The chain crosses the membrane as a helical span at residues 49–71 (STFFQIVMITTVTTNSFLLVLGT). The Extracellular segment spans residues 72–80 (NYDIQFEFF). The helical transmembrane segment at 81-107 (RTFEVSELFFVSVYVCEFLMKVYVDPI) threads the bilayer. Position 108 (T108) is a topological domain, cytoplasmic. A helical transmembrane segment spans residues 109–131 (YWKDGYNILDVIILIILTIPYLL). Residues 132–143 (RKIKGNHSAYLH) lie on the Extracellular side of the membrane. A helical membrane pass occupies residues 144-160 (FADGIQSLRILKLISYS). Residues 161–168 (RGIRTLII) are Cytoplasmic-facing. A helical transmembrane segment spans residues 169 to 195 (AVGETVYTVASVLTLLFLLMFVFAILG). Residues 196–216 (FCLFGVTDRGDLENWGNLASA) are Extracellular-facing. Residues 217 to 236 (FFTLFSLATVDGWTDLQEEL) constitute an intramembrane region (helical; Pore-forming). Topologically, residues 237–242 (DKRKFT) are extracellular. Residues 243-268 (VSRAFTILFILLASFIFLNMFVGVMI) form a helical membrane-spanning segment. Residues 269 to 395 (MHTEDSMKKF…ESSSSLSGLS (127 aa)) lie on the Cytoplasmic side of the membrane.

It belongs to the cation channel sperm-associated (TC 1.A.1.19) family. Component of the CatSper complex or CatSpermasome composed of the core pore-forming members CATSPER1, CATSPER2, CATSPER3 and CATSPER4 as well as auxiliary members CATSPERB, CATSPERG2, CATSPERD, CATSPERE, CATSPERZ, C2CD6/CATSPERT, SLCO6C1, TMEM249, TMEM262 and EFCAB9. HSPA1 may be an additional auxiliary complex member. The core complex members CATSPER1, CATSPER2, CATSPER3 and CATSPER4 form a heterotetrameric channel. The auxiliary CATSPERB, CATSPERG2, CATSPERD and CATSPERE subunits form a pavilion-like structure over the pore which stabilizes the complex through interactions with CATSPER4, CATSPER3, CATSPER1 and CATSPER2 respectively. SLCO6C1 interacts with CATSPERE and TMEM262/CATSPERH interacts with CATSPERB, further stabilizing the complex. C2CD6/CATSPERT interacts at least with CATSPERD and is required for targeting the CatSper complex in the flagellar membrane. Testis-specific.

It is found in the cell projection. Its subcellular location is the cilium. The protein resides in the flagellum membrane. The catalysed reaction is Ca(2+)(in) = Ca(2+)(out). Its activity is regulated as follows. In contrast to the human ortholog, not activated by progesterone. Activated by intracellular alkalinization. In terms of biological role, pore-forming subunit of the CatSper complex, a sperm-specific voltage-gated calcium channel that plays a central role in sperm cell hyperactivation. Controls calcium entry to mediate the hyperactivated motility, a step needed for sperm motility which is essential late in the preparation of sperm for fertilization. This is Cation channel sperm-associated protein 3 (Catsper3) from Mus musculus (Mouse).